Here is a 310-residue protein sequence, read N- to C-terminus: Olfactory receptor 9Q1 (310 aa).

The Extracellular segment spans residues 1–25 (MAEMNLTLVTEFLLIAFTEYPEWAL). An N-linked (GlcNAc...) asparagine glycan is attached at Asn5. The helical transmembrane segment at 26–46 (PLFLLFLFMYLITVLGNLEMI) threads the bilayer. The Cytoplasmic portion of the chain corresponds to 47–54 (ILILMDHQ). A helical transmembrane segment spans residues 55 to 75 (LHAPMYFLLSHLAFMDVCYSS). At 76–99 (ITVPQMLAVLLEHGAALSYTRCAA) the chain is on the extracellular side. Cysteines 97 and 189 form a disulfide. The chain crosses the membrane as a helical span at residues 100 to 120 (QFFLFTFFGSIDCYLLALMAY). Over 121 to 139 (DRYLAVCQPLLYVTILTQQ) the chain is Cytoplasmic. A helical transmembrane segment spans residues 140-160 (ARLSLVAGAYVAGLISALVRT). The Extracellular portion of the chain corresponds to 161–197 (VSAFTLSFCGTSEIDFIFCDLPPLLKLTCGESYTQEV). A helical transmembrane segment spans residues 198–217 (LIIMFAIFVIPASMVVILVS). The Cytoplasmic portion of the chain corresponds to 218 to 236 (YLFIIVAIMGIPAGSQAKT). Residues 237 to 257 (FSTCTSHLTAVSLFFGTLIFM) form a helical membrane-spanning segment. The Extracellular segment spans residues 258 to 270 (YLRGNSDQSSEKN). Residues 271–291 (RVVSVLYTEVIPMLNPLIYSL) traverse the membrane as a helical segment. The Cytoplasmic portion of the chain corresponds to 292–310 (RNKEVKEALRKILNRAKLS).

The protein belongs to the G-protein coupled receptor 1 family.

It is found in the cell membrane. Odorant receptor. The polypeptide is Olfactory receptor 9Q1 (OR9Q1) (Homo sapiens (Human)).